A 522-amino-acid chain; its full sequence is Protein nucleotidyltransferase YdiU (522 aa).

Positions 109, 111, 112, 132, 144, 145, 195, and 202 each coordinate ATP. Asp-271 serves as the catalytic Proton acceptor. 2 residues coordinate Mg(2+): Asn-272 and Asp-281. Asp-281 contacts ATP.

The protein belongs to the SELO family. Mg(2+) is required as a cofactor. Requires Mn(2+) as cofactor.

The catalysed reaction is L-seryl-[protein] + ATP = 3-O-(5'-adenylyl)-L-seryl-[protein] + diphosphate. It catalyses the reaction L-threonyl-[protein] + ATP = 3-O-(5'-adenylyl)-L-threonyl-[protein] + diphosphate. It carries out the reaction L-tyrosyl-[protein] + ATP = O-(5'-adenylyl)-L-tyrosyl-[protein] + diphosphate. The enzyme catalyses L-histidyl-[protein] + UTP = N(tele)-(5'-uridylyl)-L-histidyl-[protein] + diphosphate. The catalysed reaction is L-seryl-[protein] + UTP = O-(5'-uridylyl)-L-seryl-[protein] + diphosphate. It catalyses the reaction L-tyrosyl-[protein] + UTP = O-(5'-uridylyl)-L-tyrosyl-[protein] + diphosphate. Its function is as follows. Nucleotidyltransferase involved in the post-translational modification of proteins. It can catalyze the addition of adenosine monophosphate (AMP) or uridine monophosphate (UMP) to a protein, resulting in modifications known as AMPylation and UMPylation. This Burkholderia ambifaria (strain ATCC BAA-244 / DSM 16087 / CCUG 44356 / LMG 19182 / AMMD) (Burkholderia cepacia (strain AMMD)) protein is Protein nucleotidyltransferase YdiU.